Here is a 249-residue protein sequence, read N- to C-terminus: Cell division protein DivIB (249 aa).

Residues 1–19 (MKEENEYIVKRRKKRRRKR) are Cytoplasmic-facing. Residues 20–40 (ITIFLFLLICILVTLCLKLPY) form a helical membrane-spanning segment. A POTRA domain is found at 41–109 (FNIKYINVEG…NTIDIIVKER (69 aa)). Topologically, residues 41 to 249 (FNIKYINVEG…KGNPVYSLQQ (209 aa)) are extracellular.

This sequence belongs to the FtsQ/DivIB family. DivIB subfamily.

The protein localises to the cell membrane. In terms of biological role, cell division protein that may be involved in stabilizing or promoting the assembly of the division complex. The protein is Cell division protein DivIB of Clostridium acetobutylicum (strain ATCC 824 / DSM 792 / JCM 1419 / IAM 19013 / LMG 5710 / NBRC 13948 / NRRL B-527 / VKM B-1787 / 2291 / W).